A 40-amino-acid chain; its full sequence is Photosystem II reaction center protein J (40 aa).

A helical membrane pass occupies residues 8–28 (IPLWLVATVAGLAAIGVLGIF).

The protein belongs to the PsbJ family. In terms of assembly, PSII is composed of 1 copy each of membrane proteins PsbA, PsbB, PsbC, PsbD, PsbE, PsbF, PsbH, PsbI, PsbJ, PsbK, PsbL, PsbM, PsbT, PsbX, PsbY, PsbZ, Psb30/Ycf12, at least 3 peripheral proteins of the oxygen-evolving complex and a large number of cofactors. It forms dimeric complexes.

It is found in the plastid. It localises to the cyanelle thylakoid membrane. Its function is as follows. One of the components of the core complex of photosystem II (PSII). PSII is a light-driven water:plastoquinone oxidoreductase that uses light energy to abstract electrons from H(2)O, generating O(2) and a proton gradient subsequently used for ATP formation. It consists of a core antenna complex that captures photons, and an electron transfer chain that converts photonic excitation into a charge separation. The protein is Photosystem II reaction center protein J of Cyanophora paradoxa.